The primary structure comprises 283 residues: Elongation factor Ts (283 aa).

The tract at residues 79-82 (TDFV) is involved in Mg(2+) ion dislocation from EF-Tu.

It belongs to the EF-Ts family.

The protein resides in the cytoplasm. Functionally, associates with the EF-Tu.GDP complex and induces the exchange of GDP to GTP. It remains bound to the aminoacyl-tRNA.EF-Tu.GTP complex up to the GTP hydrolysis stage on the ribosome. The protein is Elongation factor Ts of Shewanella putrefaciens (strain CN-32 / ATCC BAA-453).